We begin with the raw amino-acid sequence, 188 residues long: Ion-translocating oxidoreductase complex subunit B (188 aa).

The tract at residues 1 to 23 (MFTAIWVMVGLAIAIGLILGWSA) is hydrophobic. One can recognise a 4Fe-4S domain in the interval 29–88 (EGNPLAEKIDAILPQTQCGQCGFPGCRPYAEAIAKGEADINQCPPGGEEGVKKLAELLGV). [4Fe-4S] cluster is bound by residues Cys-46, Cys-49, Cys-54, Cys-71, Cys-113, Cys-116, Cys-119, Cys-123, Cys-143, Cys-146, Cys-149, and Cys-153. 2 4Fe-4S ferredoxin-type domains span residues 104-133 (SVAFIDEQTCIGCTLCIQACPVDAISGAAK) and 134-163 (QMHTIIADECTGCELCLAPCPVDCISMVPI).

It belongs to the 4Fe4S bacterial-type ferredoxin family. RnfB subfamily. The complex is composed of six subunits: RnfA, RnfB, RnfC, RnfD, RnfE and RnfG. Requires [4Fe-4S] cluster as cofactor.

Its subcellular location is the cell inner membrane. In terms of biological role, part of a membrane-bound complex that couples electron transfer with translocation of ions across the membrane. The sequence is that of Ion-translocating oxidoreductase complex subunit B from Thiobacillus denitrificans (strain ATCC 25259 / T1).